A 566-amino-acid chain; its full sequence is Oxygen-dependent choline dehydrogenase (566 aa).

7–36 (DYIICGAGSAGNVLATRLTEDPNVTVLLLE) is a binding site for FAD. Residues 180–203 (NGYQQEGFGPMDRTVTPKGRRAST) are disordered. His-474 acts as the Proton acceptor in catalysis.

The protein belongs to the GMC oxidoreductase family. FAD is required as a cofactor.

It carries out the reaction choline + A = betaine aldehyde + AH2. It catalyses the reaction betaine aldehyde + NAD(+) + H2O = glycine betaine + NADH + 2 H(+). It participates in amine and polyamine biosynthesis; betaine biosynthesis via choline pathway; betaine aldehyde from choline (cytochrome c reductase route): step 1/1. Its function is as follows. Involved in the biosynthesis of the osmoprotectant glycine betaine. Catalyzes the oxidation of choline to betaine aldehyde and betaine aldehyde to glycine betaine at the same rate. The protein is Oxygen-dependent choline dehydrogenase of Burkholderia ambifaria (strain MC40-6).